A 521-amino-acid chain; its full sequence is MKLTFDLDGKIIFSKELSEEAKNAVEEVLKNADSIFLKGVPKGKENEASKIKSYEFEGNILKLKIASGTYTRAHEGLIRLRKPLAEKLGRNFRIGVRGIEIDNYVITIETDEDKAKKLEGIKVPECEAKVEGNKIILTFKDIGESELKRNIIDRAIKFVKTELEKEEEDLTFKVCKIPPGTIVSEYKAKRKITFDKDPTDVAEKLGWVKKFPGRGQWFYTPPITALFRALEELIVEEVVKKIGFQECLFPKLIPLEIMYKMRYLEGLPEGMYYVCPPKREPELFKEFVNEMMIKKEIPIEKLKNLLRDPGYVLAPAQCEPFYQFFEGEVIDVDKPIMFFDRSGWTYRWEGGGARGLDRVNEFLRVECVWIGSPEFVEETRDKTLKYAEKLAEKLDLEYWVEVGDDPFYLEGRKKEDRGIEFPDVPKYEMRLWLPHIKDERKGVAVTSANVHGTHFVEGFRIKDYKGRRVWTGCTGYGITRWVVGYLAQYGFNFDDWHPIIKKKIKKLPEVPQLITWPKKDE.

Ala316 serves as a coordination point for L-serine. Residue Cys318 coordinates Zn(2+). L-serine is bound at residue Arg347. ATP contacts are provided by residues Arg347–Glu349 and Arg358–Val359. Arg364–Glu366 serves as a coordination point for L-serine. Residues Glu366 and Cys473 each contribute to the Zn(2+) site. Residue Arg480 coordinates ATP.

Belongs to the class-II aminoacyl-tRNA synthetase family. Type-2 seryl-tRNA synthetase subfamily. As to quaternary structure, homodimer. It depends on Zn(2+) as a cofactor.

The protein resides in the cytoplasm. The catalysed reaction is tRNA(Ser) + L-serine + ATP = L-seryl-tRNA(Ser) + AMP + diphosphate + H(+). The enzyme catalyses tRNA(Sec) + L-serine + ATP = L-seryl-tRNA(Sec) + AMP + diphosphate + H(+). It participates in aminoacyl-tRNA biosynthesis; selenocysteinyl-tRNA(Sec) biosynthesis; L-seryl-tRNA(Sec) from L-serine and tRNA(Sec): step 1/1. Catalyzes the attachment of serine to tRNA(Ser). Is also able to aminoacylate tRNA(Sec) with serine, to form the misacylated tRNA L-seryl-tRNA(Sec), which will be further converted into selenocysteinyl-tRNA(Sec). The polypeptide is Type-2 serine--tRNA ligase (serS) (Methanocaldococcus jannaschii (strain ATCC 43067 / DSM 2661 / JAL-1 / JCM 10045 / NBRC 100440) (Methanococcus jannaschii)).